Reading from the N-terminus, the 570-residue chain is MKTSLQIAAEATPRPITQIAEELAIAEQFVEPYGRYRAKINLDLLDASHDRPRGKQILVTAMTPTPLGEGKTATTIGLGMALSRLGKRAICTLRQSSLGPVFGIKGGGSGGGYSQVIPLEDSLMHLTGDIHAVTQAHNQIAAMTDNSWYQKNRLGIDPEQIQIRRVLDVNDRFLRSITIGQGGSQHGIPRQTGFDITAASELMAILALVSGENHADVMRDLRQRIGRMVVAFTRQGQPITADDIQAAGAATVIMRNAIHPTLMQTIENTPVLMHGGPFANIAHGNASVVADQVGLRIADYVVTEAGFAMDMGGEKFFDIKCRAFDAKPAVVVLVATIRALKAHSGRWNIKPGRDLPTDLLQENPDAVYAGGANLQKHIRNAQLFGLPVVVALNSFPDDHPSEIEAVREIAMSAGAFDVAVSKVFSQGGVGGEELAEKVLAAIDQAGQAQFLYELEQPLTAKIATIATKIYGAAEVSYSEAASEQLAKLEANGFGNLPICMAKTHLSISHDPALKGAPTGYSFPIREVRASIGAGFIYPIAGDMMTMPGLSANPAAQQIDIDEHGNTVGLF.

ATP is bound at residue 65-72 (TPLGEGKT).

This sequence belongs to the formate--tetrahydrofolate ligase family.

It carries out the reaction (6S)-5,6,7,8-tetrahydrofolate + formate + ATP = (6R)-10-formyltetrahydrofolate + ADP + phosphate. It functions in the pathway one-carbon metabolism; tetrahydrofolate interconversion. This Herpetosiphon aurantiacus (strain ATCC 23779 / DSM 785 / 114-95) protein is Formate--tetrahydrofolate ligase.